Here is a 265-residue protein sequence, read N- to C-terminus: Tryptophan synthase alpha chain (265 aa).

Catalysis depends on proton acceptor residues glutamate 49 and aspartate 60.

Belongs to the TrpA family. As to quaternary structure, tetramer of two alpha and two beta chains.

The enzyme catalyses (1S,2R)-1-C-(indol-3-yl)glycerol 3-phosphate + L-serine = D-glyceraldehyde 3-phosphate + L-tryptophan + H2O. It participates in amino-acid biosynthesis; L-tryptophan biosynthesis; L-tryptophan from chorismate: step 5/5. Functionally, the alpha subunit is responsible for the aldol cleavage of indoleglycerol phosphate to indole and glyceraldehyde 3-phosphate. The chain is Tryptophan synthase alpha chain from Polynucleobacter necessarius subsp. necessarius (strain STIR1).